Reading from the N-terminus, the 158-residue chain is Small ribosomal subunit protein uS7 (158 aa).

This sequence belongs to the universal ribosomal protein uS7 family. As to quaternary structure, part of the 30S ribosomal subunit. Contacts proteins S9 and S11.

Functionally, one of the primary rRNA binding proteins, it binds directly to 16S rRNA where it nucleates assembly of the head domain of the 30S subunit. Is located at the subunit interface close to the decoding center, probably blocks exit of the E-site tRNA. This is Small ribosomal subunit protein uS7 from Christiangramia forsetii (strain DSM 17595 / CGMCC 1.15422 / KT0803) (Gramella forsetii).